The sequence spans 51 residues: rpoE leader peptide (51 aa).

In terms of biological role, a short protein whose stop codon overlaps with the start codon of downstream rpoE; a premature stop codon at position 12 results in decreased expression of ECF sigma factor RpoE, thus they are translationally coupled. This chain is rpoE leader peptide, found in Escherichia coli (strain K12).